A 235-amino-acid chain; its full sequence is Exosome complex component RRP46 (235 aa).

The interval 1 to 21 is disordered; that stretch reads MEGAKRADANLLTDTGTESSP. Residues 12 to 21 show a composition bias toward polar residues; the sequence is LTDTGTESSP. Phosphoserine is present on residues Ser20 and Ser23.

Belongs to the RNase PH family. As to quaternary structure, homodimer. Component of the RNA exosome core complex (Exo-9), composed of EXOSC1, EXOSC2, EXOSC3, EXOSC4, EXOSC5, EXOSC6, EXOSC7, EXOSC8 and EXOSC9; within the complex interacts with EXOSC3, EXOSC8, and EXOSC9. The catalytically inactive RNA exosome core complex (Exo-9) associates with the catalytic subunit EXOSC10/RRP6. Exo-9 may associate with DIS3 to form the nucleolar exosome complex, or DIS3L to form the cytoplasmic exosome complex. Exo-9 is formed by a hexameric base ring consisting of the heterodimers EXOSC4-EXOSC9, EXOSC5-EXOSC8 and EXOSC6-EXOSC7, and a cap ring consisting of EXOSC1, EXOSC2 and EXOSC3. The RNA exosome complex associates with cofactors C1D/RRP47, MPHOSPH6/MPP6 and MTREX/MTR4. Interacts with GTPBP1. Interacts with ZC3HAV1. Interacts with DDX17 only in the presence of ZC3HAV1 in an RNA-independent manner.

The protein localises to the nucleus. It localises to the nucleolus. The protein resides in the cytoplasm. In terms of biological role, non-catalytic component of the RNA exosome complex which has 3'-&gt;5' exoribonuclease activity and participates in a multitude of cellular RNA processing and degradation events. In the nucleus, the RNA exosome complex is involved in proper maturation of stable RNA species such as rRNA, snRNA and snoRNA, in the elimination of RNA processing by-products and non-coding 'pervasive' transcripts, such as antisense RNA species and promoter-upstream transcripts (PROMPTs), and of mRNAs with processing defects, thereby limiting or excluding their export to the cytoplasm. The RNA exosome may be involved in Ig class switch recombination (CSR) and/or Ig variable region somatic hypermutation (SHM) by targeting AICDA deamination activity to transcribed dsDNA substrates. In the cytoplasm, the RNA exosome complex is involved in general mRNA turnover and specifically degrades inherently unstable mRNAs containing AU-rich elements (AREs) within their 3' untranslated regions, and in RNA surveillance pathways, preventing translation of aberrant mRNAs. It seems to be involved in degradation of histone mRNA. The catalytic inactive RNA exosome core complex of 9 subunits (Exo-9) is proposed to play a pivotal role in the binding and presentation of RNA for ribonucleolysis, and to serve as a scaffold for the association with catalytic subunits and accessory proteins or complexes. In vitro, EXOSC5 does not bind or digest single-stranded RNA and binds to double-stranded DNA without detectable DNase activity. This is Exosome complex component RRP46 (Exosc5) from Mus musculus (Mouse).